Here is a 134-residue protein sequence, read N- to C-terminus: Ribosome-binding factor A (134 aa).

It belongs to the RbfA family. Monomer. Binds 30S ribosomal subunits, but not 50S ribosomal subunits or 70S ribosomes.

The protein localises to the cytoplasm. One of several proteins that assist in the late maturation steps of the functional core of the 30S ribosomal subunit. Associates with free 30S ribosomal subunits (but not with 30S subunits that are part of 70S ribosomes or polysomes). Required for efficient processing of 16S rRNA. May interact with the 5'-terminal helix region of 16S rRNA. This chain is Ribosome-binding factor A, found in Rhizobium leguminosarum bv. trifolii (strain WSM2304).